The chain runs to 177 residues: SPbeta prophage-derived uncharacterized N-acetyltransferase YokL (177 aa).

The region spanning 11–170 is the N-acetyltransferase domain; it reads LTLRAIQPED…DGICFGMTRE (160 aa).

The protein belongs to the acetyltransferase family.

The chain is SPbeta prophage-derived uncharacterized N-acetyltransferase YokL (yokL) from Bacillus subtilis (strain 168).